The following is a 202-amino-acid chain: Probable chemoreceptor glutamine deamidase CheD (202 aa).

It belongs to the CheD family.

It carries out the reaction L-glutaminyl-[protein] + H2O = L-glutamyl-[protein] + NH4(+). Its function is as follows. Probably deamidates glutamine residues to glutamate on methyl-accepting chemotaxis receptors (MCPs), playing an important role in chemotaxis. This chain is Probable chemoreceptor glutamine deamidase CheD, found in Thiobacillus denitrificans (strain ATCC 25259 / T1).